The chain runs to 65 residues: U15-hexatoxin-Mg1b (65 aa).

In terms of processing, contains 4 disulfide bonds. As to expression, expressed by the venom gland.

Its subcellular location is the secreted. In terms of biological role, in vivo, intrathorax injection into crickets causes death. This chain is U15-hexatoxin-Mg1b, found in Macrothele gigas (Japanese funnel web spider).